Here is a 354-residue protein sequence, read N- to C-terminus: Trans-3-hydroxy-L-proline dehydratase (354 aa).

Cys-104 serves as the catalytic Proton acceptor. Substrate is bound by residues 105 to 106 (GH), Asp-269, and 274 to 275 (GS).

It belongs to the proline racemase family. In terms of assembly, homodimer. In terms of tissue distribution, ubiquitously expressed.

The catalysed reaction is trans-3-hydroxy-L-proline = 1-pyrroline-2-carboxylate + H2O. In terms of biological role, catalyzes the dehydration of trans-3-hydroxy-L-proline to Delta(1)-pyrroline-2-carboxylate (Pyr2C). May be required to degrade trans-3-hydroxy-L-proline from the diet and originating from the degradation of proteins such as collagen-IV that contain it. The sequence is that of Trans-3-hydroxy-L-proline dehydratase (L3HYPDH) from Homo sapiens (Human).